The following is an 877-amino-acid chain: TSET complex member tstB (877 aa).

Disordered regions lie at residues His-398–Ser-437 and Thr-522–Ile-557. 2 stretches are compositionally biased toward low complexity: residues Gly-412–Ser-437 and Ser-529–Ser-556.

As to quaternary structure, component of the TSET complex, a heterohexamer composed of tstA, tstB, tstC, tstD, tstE and tstF, which may act in plasma membrane turnover. tstA, tstB, tstC and tstD are likely to be the core complex members with tstE and tstF acting as associated scaffold proteins.

The sequence is that of TSET complex member tstB from Dictyostelium discoideum (Social amoeba).